The chain runs to 223 residues: Neurotrophic factor BDNF precursor form (223 aa).

An N-terminal signal peptide occupies residues 1–5 (SCMKA). Positions 6-114 (APMKEVSIRG…AANMSMRVRR (109 aa)) are excised as a propeptide. The N-linked (GlcNAc...) asparagine glycan is linked to Asn107. Disulfide bonds link Cys127–Cys194 and Cys172–Cys223.

It belongs to the NGF-beta family.

Its subcellular location is the secreted. Its function is as follows. Promotes the survival of neuronal populations that are all located either in the central nervous system or directly connected to it. This is Neurotrophic factor BDNF precursor form (BDNF) from Lichanura trivirgata (Rosy boa).